Here is a 435-residue protein sequence, read N- to C-terminus: NADH-quinone oxidoreductase subunit D (435 aa).

Belongs to the complex I 49 kDa subunit family. NDH-1 is composed of 14 different subunits. Subunits NuoB, C, D, E, F, and G constitute the peripheral sector of the complex.

The protein localises to the cell inner membrane. The catalysed reaction is a quinone + NADH + 5 H(+)(in) = a quinol + NAD(+) + 4 H(+)(out). Its function is as follows. NDH-1 shuttles electrons from NADH, via FMN and iron-sulfur (Fe-S) centers, to quinones in the respiratory chain. The immediate electron acceptor for the enzyme in this species is believed to be ubiquinone. Couples the redox reaction to proton translocation (for every two electrons transferred, four hydrogen ions are translocated across the cytoplasmic membrane), and thus conserves the redox energy in a proton gradient. The sequence is that of NADH-quinone oxidoreductase subunit D from Xanthomonas campestris pv. campestris (strain 8004).